A 282-amino-acid polypeptide reads, in one-letter code: DegV domain-containing protein SpyM3_0586 (282 aa).

In terms of domain architecture, DegV spans 3-280 (LAVITDSTAT…EGAIAFGVTP (278 aa)). Hexadecanoate-binding residues include threonine 61 and serine 94.

In terms of biological role, may bind long-chain fatty acids, such as palmitate, and may play a role in lipid transport or fatty acid metabolism. This chain is DegV domain-containing protein SpyM3_0586, found in Streptococcus pyogenes serotype M3 (strain ATCC BAA-595 / MGAS315).